Here is a 274-residue protein sequence, read N- to C-terminus: Nickel/cobalt efflux system RcnA (274 aa).

Over 1 to 12 (MGEFPTLLQQGN) the chain is Periplasmic. Residues 13–33 (GWFFIPSAILLGILHGLEPGH) traverse the membrane as a helical segment. Topologically, residues 34–51 (SKTMMAAFIIAIKGTVKQ) are cytoplasmic. A helical transmembrane segment spans residues 52 to 72 (AVMLGLAATLSHTAIVWLIAL). At 73-85 (GGMYLSRAFTAQS) the chain is on the periplasmic side. Residues 86–106 (VEPWLQLISAIIILSTACWMF) form a helical membrane-spanning segment. Residues 107 to 174 (WRTWRGEQQW…FDGQTVTNGQ (68 aa)) lie on the Cytoplasmic side of the membrane. A compositionally biased stretch (basic and acidic residues) spans 122 to 141 (HHDHDHDHDHDHDHHGHIHP). The disordered stretch occupies residues 122-143 (HHDHDHDHDHDHDHHGHIHPEG). The helical transmembrane segment at 175–195 (ILLFGLTGGLIPCPAAITVLL) threads the bilayer. Over 196 to 209 (ICIQLKAFTLGATM) the chain is Periplasmic. The chain crosses the membrane as a helical span at residues 210–230 (VLSFSLSLALTLVTVGVGAAI). Residues 231–251 (SVQQAAKRWSGFSTLARRAPY) are Cytoplasmic-facing. Residues 252–272 (FSSILIGLVGVYMGIHGYTGI) form a helical membrane-spanning segment. Residues 273–274 (MQ) are Periplasmic-facing.

The protein belongs to the NiCoT transporter (TC 2.A.52) family. RcnA subfamily.

Its subcellular location is the cell inner membrane. Functionally, efflux system for nickel and cobalt. This chain is Nickel/cobalt efflux system RcnA (rcnA), found in Salmonella paratyphi A (strain ATCC 9150 / SARB42).